The primary structure comprises 471 residues: 8-amino-7-oxononanoate synthase (471 aa).

Arginine 40 is a substrate binding site. 131-132 is a pyridoxal 5'-phosphate binding site; that stretch reads GY. Histidine 156 serves as a coordination point for substrate. Residues serine 202, histidine 230, and threonine 258 each contribute to the pyridoxal 5'-phosphate site. Lysine 261 is subject to N6-(pyridoxal phosphate)lysine. Substrate is bound at residue threonine 377. The disordered stretch occupies residues 409-471; that stretch reads SEGQTRREAE…LGAARRETAA (63 aa).

This sequence belongs to the class-II pyridoxal-phosphate-dependent aminotransferase family. BioF subfamily. As to quaternary structure, homodimer. It depends on pyridoxal 5'-phosphate as a cofactor.

It carries out the reaction 6-carboxyhexanoyl-[ACP] + L-alanine + H(+) = (8S)-8-amino-7-oxononanoate + holo-[ACP] + CO2. It participates in cofactor biosynthesis; biotin biosynthesis. Functionally, catalyzes the decarboxylative condensation of pimeloyl-[acyl-carrier protein] and L-alanine to produce 8-amino-7-oxononanoate (AON), [acyl-carrier protein], and carbon dioxide. In Burkholderia ambifaria (strain ATCC BAA-244 / DSM 16087 / CCUG 44356 / LMG 19182 / AMMD) (Burkholderia cepacia (strain AMMD)), this protein is 8-amino-7-oxononanoate synthase.